We begin with the raw amino-acid sequence, 474 residues long: Trehalose-6-phosphate synthase (474 aa).

Residue Arg-10 coordinates D-glucose 6-phosphate. 22-23 (GG) lines the UDP-alpha-D-glucose pocket. Residues Tyr-77 and Asp-131 each coordinate D-glucose 6-phosphate. The UDP-alpha-D-glucose site is built by Arg-263 and Lys-268. Arg-301 is a D-glucose 6-phosphate binding site. Residues Phe-340 and 366 to 370 (LVAKE) each bind UDP-alpha-D-glucose.

This sequence belongs to the glycosyltransferase 20 family. As to quaternary structure, homotetramer.

The catalysed reaction is D-glucose 6-phosphate + UDP-alpha-D-glucose = alpha,alpha-trehalose 6-phosphate + UDP + H(+). It participates in glycan biosynthesis; trehalose biosynthesis. Probably involved in the osmoprotection via the biosynthesis of trehalose. Catalyzes the transfer of glucose from UDP-alpha-D-glucose (UDP-Glc) to D-glucose 6-phosphate (Glc-6-P) to form trehalose-6-phosphate. Acts with retention of the anomeric configuration of the UDP-sugar donor. In Pseudomonas savastanoi (Pseudomonas syringae pv. savastanoi), this protein is Trehalose-6-phosphate synthase.